A 451-amino-acid polypeptide reads, in one-letter code: Phosphoglucosamine mutase (451 aa).

Ser-104 acts as the Phosphoserine intermediate in catalysis. The Mg(2+) site is built by Ser-104, Asp-249, Asp-251, and Asp-253. Ser-104 is modified (phosphoserine).

It belongs to the phosphohexose mutase family. Requires Mg(2+) as cofactor. Post-translationally, activated by phosphorylation.

The enzyme catalyses alpha-D-glucosamine 1-phosphate = D-glucosamine 6-phosphate. In terms of biological role, catalyzes the conversion of glucosamine-6-phosphate to glucosamine-1-phosphate. The protein is Phosphoglucosamine mutase of Psychrobacter sp. (strain PRwf-1).